Reading from the N-terminus, the 224-residue chain is Lipoprotein-releasing system ATP-binding protein LolD (224 aa).

The ABC transporter domain occupies 5–224; it reads LEILDVSKCY…SLSGGMLTEL (220 aa). 40 to 47 is an ATP binding site; it reads GSSGSGKS.

It belongs to the ABC transporter superfamily. Lipoprotein translocase (TC 3.A.1.125) family. As to quaternary structure, the complex is composed of two ATP-binding proteins (LolD) and two transmembrane proteins (LolC and LolE).

It is found in the cell inner membrane. Part of the ABC transporter complex LolCDE involved in the translocation of mature outer membrane-directed lipoproteins, from the inner membrane to the periplasmic chaperone, LolA. Responsible for the formation of the LolA-lipoprotein complex in an ATP-dependent manner. This chain is Lipoprotein-releasing system ATP-binding protein LolD, found in Anaplasma marginale (strain St. Maries).